We begin with the raw amino-acid sequence, 491 residues long: MKVRVRFCPSPTGTPHVGLIRTALFNWAYARHTGGDFVFRIEDTDAQRDSEESYLALLDALRWLGMDWDEGPEVGGPYAPYRQSQRRDLYLDVIRRLLAAGEAYEAFSTAEEVEARHLAAGRNPKLGYDNFDRDLTEEQRAAFRAEGRQPVVRLRMPDADMTWVDLVRGETTFPVGSVPDFALTRGSGDPLYTLVNPVDDALMKITHVLRGEDLLPSTPRQLALYAALIRIGVTDMTPQFAHLPSVLGEGNKKLSKRDPQSNLFLHRERGFIPEGLLNYLALLGWSIADDRDIFSVQEMVAAFDVADVNSNPARFDQKKADALNAEHIRRLDEAEFVRRLADYFSTHGYDTGLDDARFAEAAALVQTRIVVLGDAWDLLKFLDESSFALDEKSAGKELKDTAVPVLTAALAALKGVGEWTTAQIEDALKVALIDGLELKPRKAFGPVRVAVTGSSISPPLFESLELLGRDRSLERLRAGRDHAAAAVTMDA.

A 'HIGH' region motif is present at residues 9-19; it reads PSPTGTPHVGL. The short motif at 253–257 is the 'KMSKS' region element; sequence KLSKR. Lys-256 is an ATP binding site.

It belongs to the class-I aminoacyl-tRNA synthetase family. Glutamate--tRNA ligase type 1 subfamily. Monomer.

It is found in the cytoplasm. It catalyses the reaction tRNA(Glu) + L-glutamate + ATP = L-glutamyl-tRNA(Glu) + AMP + diphosphate. In terms of biological role, catalyzes the attachment of glutamate to tRNA(Glu) in a two-step reaction: glutamate is first activated by ATP to form Glu-AMP and then transferred to the acceptor end of tRNA(Glu). This is Glutamate--tRNA ligase from Mycolicibacterium gilvum (strain PYR-GCK) (Mycobacterium gilvum (strain PYR-GCK)).